The chain runs to 581 residues: Phosphoinositide phospholipase C 2 (581 aa).

Residues 26–102 (EIKTIFEKYS…NPPLALHKVH (77 aa)) enclose the EF-hand-like domain. The 146-residue stretch at 103–248 (HDMDAPISHY…LKRRIIISTK (146 aa)) folds into the PI-PLC X-box domain. Catalysis depends on residues histidine 118 and histidine 164. The disordered stretch occupies residues 279-314 (PSFIQRNKSEAKDDLDGNDDDDDDDDEDKSKINAPP). Over residues 294–305 (DGNDDDDDDDDE) the composition is skewed to acidic residues. In terms of domain architecture, PI-PLC Y-box spans 317-433 (KHLIAIHAGK…GYIKKPDLLL (117 aa)). A C2 domain is found at 434–563 (KSGSDSDIFD…EGIRAFPLHS (130 aa)).

Ca(2+) is required as a cofactor. Phosphorylation level varies significantly during early response to bacterial elicitor. Expressed in roots, shoots, leaves and flowers.

It localises to the cell membrane. The catalysed reaction is a 1,2-diacyl-sn-glycero-3-phospho-(1D-myo-inositol-4,5-bisphosphate) + H2O = 1D-myo-inositol 1,4,5-trisphosphate + a 1,2-diacyl-sn-glycerol + H(+). In terms of biological role, the production of the second messenger molecules diacylglycerol (DAG) and inositol 1,4,5-trisphosphate (IP3) is mediated by activated phosphatidylinositol-specific phospholipase C enzymes. At physiological calcium concentration, the preferred substrate is phosphatidylinositol 4,5-bisphosphate versus phosphatidylinositol. The protein is Phosphoinositide phospholipase C 2 (PLC2) of Arabidopsis thaliana (Mouse-ear cress).